An 88-amino-acid polypeptide reads, in one-letter code: Small ribosomal subunit protein bS18 (88 aa).

The segment at 1 to 22 (MSTKNAKPKKEAQRRPSRKAKV) is disordered.

This sequence belongs to the bacterial ribosomal protein bS18 family. As to quaternary structure, part of the 30S ribosomal subunit. Forms a tight heterodimer with protein bS6.

In terms of biological role, binds as a heterodimer with protein bS6 to the central domain of the 16S rRNA, where it helps stabilize the platform of the 30S subunit. This is Small ribosomal subunit protein bS18 (rpsR) from Thermus thermophilus (strain ATCC BAA-163 / DSM 7039 / HB27).